The primary structure comprises 129 residues: Small ribosomal subunit protein uS11 (129 aa).

Belongs to the universal ribosomal protein uS11 family. In terms of assembly, part of the 30S ribosomal subunit. Interacts with proteins S7 and S18. Binds to IF-3.

Located on the platform of the 30S subunit, it bridges several disparate RNA helices of the 16S rRNA. Forms part of the Shine-Dalgarno cleft in the 70S ribosome. This chain is Small ribosomal subunit protein uS11, found in Lactiplantibacillus plantarum (strain ATCC BAA-793 / NCIMB 8826 / WCFS1) (Lactobacillus plantarum).